The primary structure comprises 192 residues: Casparian strip membrane protein 2 (192 aa).

Topologically, residues 1-31 are cytoplasmic; it reads MTKDVVVEHGESSKAPLVAAPAASGVGRAAS. The helical transmembrane segment at 32 to 52 threads the bilayer; the sequence is VADVFLRFLAIVGTIASAISM. At 53-79 the chain is on the extracellular side; sequence GTTNETLPFFTQFIQFEAKYSDLPSFT. An N-linked (GlcNAc...) asparagine glycan is attached at N56. Residues 80 to 100 traverse the membrane as a helical segment; it reads FFVAANAVVCTYLVLSIPLSI. At 101–112 the chain is on the cytoplasmic side; that stretch reads VHIVRPRARYSR. A helical membrane pass occupies residues 113-133; it reads LVLVFFDAAMLTLLTAGASAA. The Extracellular portion of the chain corresponds to 134–166; the sequence is AAIVYLAHKGNVRANWFAICQQFDSFCERISGS. A helical transmembrane segment spans residues 167–187; that stretch reads LIGSFAAMVLLIMLIFLSAFA. At 188 to 192 the chain is on the cytoplasmic side; the sequence is LARRH.

It belongs to the Casparian strip membrane proteins (CASP) family. As to quaternary structure, homodimer and heterodimers.

The protein localises to the cell membrane. In terms of biological role, regulates membrane-cell wall junctions and localized cell wall deposition. Required for establishment of the Casparian strip membrane domain (CSD) and the subsequent formation of Casparian strips, a cell wall modification of the root endodermis that determines an apoplastic barrier between the intraorganismal apoplasm and the extraorganismal apoplasm and prevents lateral diffusion. In Panicum virgatum (Blackwell switchgrass), this protein is Casparian strip membrane protein 2.